Consider the following 317-residue polypeptide: MARIVFMGTPDFSVPVLQTLITEGYEVVGVVTQPDRPKGRKRVLTPPPVKVEALKHGIPVLQPEKVRLDEEIDKVLALKPDLIVTAAFGQILPKRLLDEPQFGCINVHASLLPELRGGAPIHYAILQGKKKTGVTIMYMVERLDAGDMISKVEVEIDELDNVGTLHDKLSVAGAALLKDTVPNVLSGSISPIPQNEDAATYAPNIKREQERLDWTKTGEELYNQVRGLNPWPVAYTEWNGAHLKVWEAKKVPLEVQEEAGKVIELQKEGPVIGTGNKQGLLLTGVQPAGKKKMSGEDFLRGANIEIGQKLGLMNEEK.

110 to 113 is a binding site for (6S)-5,6,7,8-tetrahydrofolate; it reads SLLP.

Belongs to the Fmt family.

It carries out the reaction L-methionyl-tRNA(fMet) + (6R)-10-formyltetrahydrofolate = N-formyl-L-methionyl-tRNA(fMet) + (6S)-5,6,7,8-tetrahydrofolate + H(+). Its function is as follows. Attaches a formyl group to the free amino group of methionyl-tRNA(fMet). The formyl group appears to play a dual role in the initiator identity of N-formylmethionyl-tRNA by promoting its recognition by IF2 and preventing the misappropriation of this tRNA by the elongation apparatus. This chain is Methionyl-tRNA formyltransferase, found in Bacillus pumilus (strain SAFR-032).